The chain runs to 184 residues: TATA-box-binding protein (184 aa).

2 consecutive repeat copies span residues 9 to 85 and 100 to 178.

Belongs to the TBP family.

General factor that plays a role in the activation of archaeal genes transcribed by RNA polymerase. Binds specifically to the TATA box promoter element which lies close to the position of transcription initiation. The polypeptide is TATA-box-binding protein (Picrophilus torridus (strain ATCC 700027 / DSM 9790 / JCM 10055 / NBRC 100828 / KAW 2/3)).